Reading from the N-terminus, the 420-residue chain is Pre-mRNA-splicing factor RBM22 (420 aa).

Ala-2 bears the N-acetylalanine mark. Phosphoserine occurs at positions 4 and 102. Residues Lys-139 and Lys-149 each participate in a glycyl lysine isopeptide (Lys-Gly) (interchain with G-Cter in SUMO2) cross-link. The C3H1-type zinc-finger motif lies at 159–186 (RNRPHICSFWVKGECKRGEECPYRHEKP). Lys-212 is subject to N6-acetyllysine. In terms of domain architecture, RRM spans 232 to 305 (TTLYVGGLGD…RRLNVKWGRS (74 aa)). Residue Lys-290 forms a Glycyl lysine isopeptide (Lys-Gly) (interchain with G-Cter in SUMO2) linkage. 2 disordered regions span residues 303–343 (GRSQ…AAEE) and 372–420 (APPP…HSSP). Basic and acidic residues predominate over residues 309–318 (RGKEKEKDGT).

It belongs to the SLT11 family. As to quaternary structure, component of the pre-catalytic and catalytic spliceosome complexes. Component of the postcatalytic spliceosome P complex. Interacts with PDCD6; the interaction induces translocation of PDCD6 in the cytoplasm. Interacts with PPIL1.

It is found in the nucleus. It localises to the cytoplasm. Required for pre-mRNA splicing as component of the activated spliceosome. Involved in the first step of pre-mRNA splicing. Binds directly to the internal stem-loop (ISL) domain of the U6 snRNA and to the pre-mRNA intron near the 5' splice site during the activation and catalytic phases of the spliceosome cycle. Involved in both translocations of the nuclear SLU7 to the cytoplasm and the cytosolic calcium-binding protein PDCD6 to the nucleus upon cellular stress responses. The chain is Pre-mRNA-splicing factor RBM22 (RBM22) from Bos taurus (Bovine).